A 100-amino-acid chain; its full sequence is Putative septation protein SpoVG (100 aa).

The protein belongs to the SpoVG family.

Functionally, could be involved in septation. In Staphylococcus aureus (strain MRSA252), this protein is Putative septation protein SpoVG.